The primary structure comprises 487 residues: ATP-dependent rRNA helicase RRP3 (487 aa).

The tract at residues 22–67 (IKRKALEKQQQAHANEPSPSDEDSAQSNSKDSNSNEQPEESEEIFE) is disordered. The short motif at 67–95 (ESFTELDLVPELIEACKNLNYNKPTPIQS) is the Q motif element. Residues 98 to 270 (IPPALKGSDI…RASLTNPVKC (173 aa)) enclose the Helicase ATP-binding domain. 111–118 (AQTGSGKT) provides a ligand contact to ATP. Positions 217 to 220 (DEAD) match the DEAD box motif. One can recognise a Helicase C-terminal domain in the interval 298-442 (LIYLLNEFIG…ENVDKDAILA (145 aa)). A disordered region spans residues 459-487 (NRRNKEKQARGKGRRGRMATRDNMDREER). Over residues 477–487 (ATRDNMDREER) the composition is skewed to basic and acidic residues.

The protein belongs to the DEAD box helicase family. DDX47/RRP3 subfamily. In terms of assembly, interacts with the SSU processome.

It localises to the nucleus. The enzyme catalyses ATP + H2O = ADP + phosphate + H(+). Its function is as follows. ATP-dependent rRNA helicase required for pre-ribosomal RNA processing. Involved in the maturation of the 35S-pre-rRNA and to its cleavage to mature 18S rRNA. The chain is ATP-dependent rRNA helicase RRP3 from Kluyveromyces lactis (strain ATCC 8585 / CBS 2359 / DSM 70799 / NBRC 1267 / NRRL Y-1140 / WM37) (Yeast).